A 117-amino-acid polypeptide reads, in one-letter code: Large ribosomal subunit protein bL20c (117 aa).

Belongs to the bacterial ribosomal protein bL20 family.

The protein localises to the plastid. The protein resides in the chloroplast. In terms of biological role, binds directly to 23S ribosomal RNA and is necessary for the in vitro assembly process of the 50S ribosomal subunit. It is not involved in the protein synthesizing functions of that subunit. The sequence is that of Large ribosomal subunit protein bL20c from Ceratophyllum demersum (Rigid hornwort).